A 27-amino-acid polypeptide reads, in one-letter code: Delta-conotoxin SuVIA (27 aa).

3 disulfides stabilise this stretch: Cys1/Cys17, Cys8/Cys21, and Cys16/Cys25.

It belongs to the conotoxin O1 superfamily. In terms of tissue distribution, expressed by the venom duct, in the proximal part (indicative of a defensive role).

It localises to the secreted. Functionally, this toxin activates voltage-gated sodium channels (Nav1.3/SCN3A (EC(50)=3.98 nM), Nav1.4/SCN4A (EC(50)=4.99 nM), Nav1.6/SCN8A (EC(50)=1.27 nM) and Nav1.7/SCN9A (EC(50)=2.42 nM)). It shifts the voltage-dependence of activation to more hyperpolarized potentials but has only little effect on channel inactivation. In vivo, it induces nocifensive or pain-like behaviors in mice when injected intraplantarly. This is coherent with the specific defensive role deduced from its proximal position in the venom gland. The protein is Delta-conotoxin SuVIA of Conus suturatus (Sutured cone).